The primary structure comprises 301 residues: NAD kinase (301 aa).

The active-site Proton acceptor is Asp73. Residues 73 to 74, 151 to 152, Arg179, Asp181, 192 to 197, Ala216, and Gln250 each bind NAD(+); these read DG, ND, and TAYALS.

The protein belongs to the NAD kinase family. The cofactor is a divalent metal cation.

The protein localises to the cytoplasm. The catalysed reaction is NAD(+) + ATP = ADP + NADP(+) + H(+). Its function is as follows. Involved in the regulation of the intracellular balance of NAD and NADP, and is a key enzyme in the biosynthesis of NADP. Catalyzes specifically the phosphorylation on 2'-hydroxyl of the adenosine moiety of NAD to yield NADP. The sequence is that of NAD kinase from Methylibium petroleiphilum (strain ATCC BAA-1232 / LMG 22953 / PM1).